We begin with the raw amino-acid sequence, 164 residues long: UPF0114 protein Avin_40830 (164 aa).

The next 4 helical transmembrane spans lie at 15-35 (LLAP…LKFF), 53-73 (LILV…LVMV), 103-125 (GSLK…LRVF), and 136-156 (LLWY…MSYL).

This sequence belongs to the UPF0114 family.

The protein localises to the cell membrane. The chain is UPF0114 protein Avin_40830 from Azotobacter vinelandii (strain DJ / ATCC BAA-1303).